Here is an 839-residue protein sequence, read N- to C-terminus: Protein translocase subunit SecA (839 aa).

ATP contacts are provided by residues Gln-85, 103 to 107 (GEGKT), and Asp-493. A compositionally biased stretch (basic and acidic residues) spans 780–790 (QIHEQERERAS). A disordered region spans residues 780 to 839 (QIHEQERERASQRATTAAPQNIQSQQSANTDDLPKVERNEACPCGSGKKFKNCHGRKSFS). Polar residues predominate over residues 791–809 (QRATTAAPQNIQSQQSANT). Zn(2+) is bound by residues Cys-821, Cys-823, Cys-832, and His-833. Over residues 827–839 (KKFKNCHGRKSFS) the composition is skewed to basic residues.

This sequence belongs to the SecA family. In terms of assembly, monomer and homodimer. Part of the essential Sec protein translocation apparatus which comprises SecA, SecYEG and auxiliary proteins SecDF. Other proteins may also be involved. It depends on Zn(2+) as a cofactor.

Its subcellular location is the cell membrane. The protein localises to the cytoplasm. It catalyses the reaction ATP + H2O + cellular proteinSide 1 = ADP + phosphate + cellular proteinSide 2.. In terms of biological role, part of the Sec protein translocase complex. Interacts with the SecYEG preprotein conducting channel. Has a central role in coupling the hydrolysis of ATP to the transfer of proteins into and across the cell membrane, serving as an ATP-driven molecular motor driving the stepwise translocation of polypeptide chains across the membrane. The sequence is that of Protein translocase subunit SecA from Streptococcus pyogenes serotype M3 (strain ATCC BAA-595 / MGAS315).